Consider the following 255-residue polypeptide: uncharacterized protein (255 aa).

A signal peptide spans 1–18 (MRILIILSIILCSLFTKA).

It belongs to the MlaA family.

This is an uncharacterized protein from Rickettsia bellii (strain RML369-C).